We begin with the raw amino-acid sequence, 762 residues long: 5-methyltetrahydropteroyltriglutamate--homocysteine methyltransferase (762 aa).

5-methyltetrahydropteroyltri-L-glutamate-binding positions include 16–19 (RELK) and Lys-118. L-homocysteine is bound by residues 439–441 (IGS) and Glu-492. L-methionine contacts are provided by residues 439 to 441 (IGS) and Glu-492. 5-methyltetrahydropteroyltri-L-glutamate-binding positions include 523–524 (RC) and Trp-569. Residue Asp-607 participates in L-homocysteine binding. Asp-607 provides a ligand contact to L-methionine. Glu-613 is a binding site for 5-methyltetrahydropteroyltri-L-glutamate. Zn(2+)-binding residues include His-649, Cys-651, and Glu-673. Residue His-702 is the Proton donor of the active site. Residue Cys-734 coordinates Zn(2+).

Belongs to the vitamin-B12 independent methionine synthase family. Zn(2+) serves as cofactor.

It catalyses the reaction 5-methyltetrahydropteroyltri-L-glutamate + L-homocysteine = tetrahydropteroyltri-L-glutamate + L-methionine. It participates in amino-acid biosynthesis; L-methionine biosynthesis via de novo pathway; L-methionine from L-homocysteine (MetE route): step 1/1. Catalyzes the transfer of a methyl group from 5-methyltetrahydrofolate to homocysteine resulting in methionine formation. The chain is 5-methyltetrahydropteroyltriglutamate--homocysteine methyltransferase from Pseudomonas entomophila (strain L48).